A 315-amino-acid chain; its full sequence is Polyprenyl transferase mpaA (315 aa).

Transmembrane regions (helical) follow at residues 40-60, 84-103, 118-135, 143-163, 174-194, 224-244, 248-268, and 279-299; these read IEFI…LCGA, LASG…GQYF, IWSL…YPYL, VFVY…ITGW, GDII…CVYF, LFLA…ISTI, WLWV…IAQF, and IHWD…VEVG.

Belongs to the UbiA prenyltransferase family. Requires Mg(2+) as cofactor.

The protein resides in the golgi apparatus membrane. The catalysed reaction is 5,7-dihydroxy-4-methylphthalide + (2E,6E)-farnesyl diphosphate = 4-farnesyl-3,5-dihydroxy-6-methylphthalide + diphosphate. It functions in the pathway secondary metabolite biosynthesis; terpenoid biosynthesis. Functionally, polyprenyl transferase; part of the gene cluster that mediates the biosynthesis of mycophenolic acid (MPA), the first isolated antibiotic natural product in the world obtained from a culture of Penicillium brevicompactum in 1893. MpaA is a Golgi apparatus-associated enzyme that catalyzes the prenylation of 5,7-dihydroxy-4,6-dimethylphthalide (DHMP) to yield farnesyl-DHMP (FDHMP). The first step of the pathway is the synthesis of 5-methylorsellinic acid (5MOA) by the cytosolic polyketide synthase mpaC. 5MOA is then converted to the phthalide compound 5,7-dihydroxy-4,6-dimethylphthalide (DHMP) by the endoplasmic reticulum-bound cytochrome P450 monooxygenase mpaDE. MpaDE first catalyzes hydroxylation of 5-MOA to 4,6-dihydroxy-2-(hydroxymethyl)-3-methylbenzoic acid (DHMB). MpaDE then acts as a lactone synthase that catalyzes the ring closure to convert DHMB into DHMP. The next step is the prenylation of DHMP by the Golgi apparatus-associated prenyltransferase mpaA to yield farnesyl-DHMP (FDHMP). The ER-bound oxygenase mpaB then mediates the oxidative cleavage the C19-C20 double bond in FDHMP to yield FDHMP-3C via a mycophenolic aldehyde intermediate. The O-methyltransferase mpaG catalyzes the methylation of FDHMP-3C to yield MFDHMP-3C. After the cytosolic methylation of FDHMP-3C, MFDHMP-3C enters into peroxisomes probably via free diffusion due to its low molecular weight. Upon a peroxisomal CoA ligation reaction, catalyzed by a beta-oxidation component enzyme acyl-CoA ligase ACL891, MFDHMP-3C-CoA would then be restricted to peroxisomes for the following beta-oxidation pathway steps. The peroxisomal beta-oxidation machinery than converts MFDHMP-3C-CoA into MPA_CoA, via a beta-oxidation chain-shortening process. Finally mpaH acts as a peroxisomal acyl-CoA hydrolase with high substrate specificity toward MPA-CoA to release the final product MPA. In Penicillium brevicompactum, this protein is Polyprenyl transferase mpaA.